Here is a 40-residue protein sequence, read N- to C-terminus: Photosystem II reaction center protein J (40 aa).

A helical membrane pass occupies residues 8-28 (IPLWLIGTVAGILVLGLLGIF).

This sequence belongs to the PsbJ family. As to quaternary structure, PSII is composed of 1 copy each of membrane proteins PsbA, PsbB, PsbC, PsbD, PsbE, PsbF, PsbH, PsbI, PsbJ, PsbK, PsbL, PsbM, PsbT, PsbX, PsbY, PsbZ, Psb30/Ycf12, at least 3 peripheral proteins of the oxygen-evolving complex and a large number of cofactors. It forms dimeric complexes.

It localises to the plastid. The protein resides in the chloroplast thylakoid membrane. In terms of biological role, one of the components of the core complex of photosystem II (PSII). PSII is a light-driven water:plastoquinone oxidoreductase that uses light energy to abstract electrons from H(2)O, generating O(2) and a proton gradient subsequently used for ATP formation. It consists of a core antenna complex that captures photons, and an electron transfer chain that converts photonic excitation into a charge separation. The chain is Photosystem II reaction center protein J from Physcomitrium patens (Spreading-leaved earth moss).